Reading from the N-terminus, the 462-residue chain is 3-isopropylmalate dehydratase large subunit (462 aa).

3 residues coordinate [4Fe-4S] cluster: Cys-337, Cys-397, and Cys-400.

This sequence belongs to the aconitase/IPM isomerase family. LeuC type 1 subfamily. In terms of assembly, heterodimer of LeuC and LeuD. The cofactor is [4Fe-4S] cluster.

The catalysed reaction is (2R,3S)-3-isopropylmalate = (2S)-2-isopropylmalate. It participates in amino-acid biosynthesis; L-leucine biosynthesis; L-leucine from 3-methyl-2-oxobutanoate: step 2/4. In terms of biological role, catalyzes the isomerization between 2-isopropylmalate and 3-isopropylmalate, via the formation of 2-isopropylmaleate. The chain is 3-isopropylmalate dehydratase large subunit from Listeria monocytogenes serovar 1/2a (strain ATCC BAA-679 / EGD-e).